The sequence spans 475 residues: MTATAEKTAGRVVRITGPVVDVEFPRGSVPELFNALHAEISYKDLSKTLTLEVAQHLGDNLVRTISMQPTDGLVRGVEVTDTGTSISVPVGDGVKGHVFNALGDCLDEPGYGKDFEHWSIHRKPPAFADLEPRTEMLETGLKVVDLLTPYVRGGKIALFGGAGVGKTVLIQEMINRIARNFGGTSVFAGVGERTREGNDLWVELADANVLKDTALVFGQMDEPPGTRMRVALSALTMAEFFRDEQGQDVLLFIDNIFRFTQAGSEVSTLLGRMPSAVGYQPTLADEMGELQERITSTRGKSITSMQAVYVPADDYTDPAPATTFAHLDATTELSRAVFSKGIFPAVDPLASSSTILDPAVVGDEHYRVAQEVIRILQRYKDLQDIIAILGIDELAEEDKQLVQRARRIERFLSQNMMAAEQFTGQPGSTVPLKETIEAFDKLTKGDFDHLPEQAFFLIGGLDDLAKKAESLGAKL.

160 to 167 (GGAGVGKT) serves as a coordination point for ATP.

The protein belongs to the ATPase alpha/beta chains family. As to quaternary structure, F-type ATPases have 2 components, CF(1) - the catalytic core - and CF(0) - the membrane proton channel. CF(1) has five subunits: alpha(3), beta(3), gamma(1), delta(1), epsilon(1). CF(0) has three main subunits: a(1), b(2) and c(9-12). The alpha and beta chains form an alternating ring which encloses part of the gamma chain. CF(1) is attached to CF(0) by a central stalk formed by the gamma and epsilon chains, while a peripheral stalk is formed by the delta and b chains.

Its subcellular location is the cell membrane. It carries out the reaction ATP + H2O + 4 H(+)(in) = ADP + phosphate + 5 H(+)(out). In terms of biological role, produces ATP from ADP in the presence of a proton gradient across the membrane. The catalytic sites are hosted primarily by the beta subunits. This Mycolicibacterium vanbaalenii (strain DSM 7251 / JCM 13017 / BCRC 16820 / KCTC 9966 / NRRL B-24157 / PYR-1) (Mycobacterium vanbaalenii) protein is ATP synthase subunit beta.